The following is a 1358-amino-acid chain: Tenascin-R (1358 aa).

Residues 1–31 form the signal peptide; sequence MGIDGETVVLKNMLIGVNLILLGSMLKPSEC. Residues 37-58 form a disordered region; it reads TERAQRQTVEEEGGASSYNTSS. Residue Asn55 is glycosylated (N-linked (GlcNAc...) asparagine). Residues 127–157 adopt a coiled-coil conformation; it reads CASSSQVLQELLSRIEMLEREVSLLRDQCNT. The O-linked (Xyl...) (chondroitin sulfate) serine glycan is linked to Ser176. N-linked (GlcNAc...) asparagine glycosylation is found at Asn180 and Asn198. EGF-like domains are found at residues 188 to 199, 219 to 230, and 250 to 261; these read CICNEGWFGKNC, CICDSEYSGDDC, and CVCEEPYTGEDC. O-linked (Xyl...) (chondroitin sulfate) serine glycosylation is present at Ser271. N-linked (GlcNAc...) asparagine glycosylation occurs at Asn278. The 12-residue stretch at 281–292 folds into the EGF-like 4 domain; that stretch reads CLCQEGYAGEDC. Intrachain disulfides connect Cys297/Cys307 and Cys314/Cys323. Ser302 is a glycosylation site (O-linked (Xyl...) (chondroitin sulfate) serine). In terms of domain architecture, EGF-like 5 spans 312 to 323; sequence CICEEGYQGPDC. 9 Fibronectin type-III domains span residues 328–420, 421–505, 506–597, 598–687, 688–777, 778–865, 866–955, 956–1042, and 1043–1131; these read PPED…TPQG, LQFK…TVID, GPTQ…IDAP, KNLR…TELD, SPRD…FRPI, SHLH…TGID, PPKN…AMDS, PMDL…TLLD, and PPDN…GGRV. Asn392, Asn470, and Asn581 each carry an N-linked (GlcNAc...) asparagine glycan. Phosphoserine is present on Ser724. N-linked (GlcNAc...) asparagine glycosylation is found at Asn791, Asn869, Asn874, Asn1036, Asn1046, and Asn1261. One can recognise a Fibrinogen C-terminal domain in the interval 1129 to 1344; it reads GRVFSHPQDC…FVEMKMRPYI (216 aa).

The protein belongs to the tenascin family. Interacts with BCAN and ACAN in a calcium-dependent manner. Interacts with SCN2B, PTPRZ1, and CSPG3. Forms oligomers. Isoforms 1 and 2 form respectively trimeric (tribrachion) and dimeric kink-armed rodlike structures, which are linked by disulfide bridges. Interacts with CNTN1, TNC and FN1. Post-translationally, contains N-linked oligosaccharides with a sulfated carbohydrate structures. Contains N-linked oligosaccharides, O-linked sialylated structures and O-linked chondroitin sulfate glycosaminoglycans. As to expression, brain-specific.

The protein localises to the secreted. The protein resides in the extracellular space. Its subcellular location is the extracellular matrix. Neural extracellular matrix (ECM) protein involved in interactions with different cells and matrix components. Theses interactions can influence cellular behavior by either evoking a stable adhesion and differentiation, or repulsion and inhibition of neurite growth. Binding to cell surface gangliosides inhibits RGD-dependent integrin-mediated cell adhesion and results in an inhibition of PTK2/FAK1 (FAK) phosphorylation and cell detachment. Binding to membrane surface sulfatides results in a oligodendrocyte adhesion and differentiation. Interaction with CNTN1 induces a repulsion of neurons and an inhibition of neurite outgrowth. Interacts with SCN2B may play a crucial role in clustering and regulation of activity of sodium channels at nodes of Ranvier. TNR-linked chondroitin sulfate glycosaminoglycans are involved in the interaction with FN1 and mediates inhibition of cell adhesion and neurite outgrowth. The highly regulated addition of sulfated carbohydrate structure may modulate the adhesive properties of TNR over the course of development and during synapse maintenance. This is Tenascin-R (Tnr) from Mus musculus (Mouse).